The sequence spans 89 residues: Small ribosomal subunit protein bS20 (89 aa).

The tract at residues 1-29 is disordered; that stretch reads MTLANIKSAKKRAVQSEKRRQHNASQRSM.

Belongs to the bacterial ribosomal protein bS20 family.

Functionally, binds directly to 16S ribosomal RNA. The chain is Small ribosomal subunit protein bS20 from Haemophilus influenzae (strain 86-028NP).